Reading from the N-terminus, the 376-residue chain is Lipid-A-disaccharide synthase (376 aa).

This sequence belongs to the LpxB family.

The enzyme catalyses a lipid X + a UDP-2-N,3-O-bis[(3R)-3-hydroxyacyl]-alpha-D-glucosamine = a lipid A disaccharide + UDP + H(+). It functions in the pathway bacterial outer membrane biogenesis; LPS lipid A biosynthesis. Condensation of UDP-2,3-diacylglucosamine and 2,3-diacylglucosamine-1-phosphate to form lipid A disaccharide, a precursor of lipid A, a phosphorylated glycolipid that anchors the lipopolysaccharide to the outer membrane of the cell. The protein is Lipid-A-disaccharide synthase of Coxiella burnetii (strain Dugway 5J108-111).